We begin with the raw amino-acid sequence, 274 residues long: 4-deoxy-L-threo-5-hexosulose-uronate ketol-isomerase (274 aa).

4 residues coordinate Zn(2+): His192, His194, Glu199, and His241.

It belongs to the KduI family. It depends on Zn(2+) as a cofactor.

The catalysed reaction is 5-dehydro-4-deoxy-D-glucuronate = 3-deoxy-D-glycero-2,5-hexodiulosonate. It functions in the pathway glycan metabolism; pectin degradation; 2-dehydro-3-deoxy-D-gluconate from pectin: step 4/5. Functionally, catalyzes the isomerization of 5-dehydro-4-deoxy-D-glucuronate to 3-deoxy-D-glycero-2,5-hexodiulosonate. This Cereibacter sphaeroides (strain ATCC 17029 / ATH 2.4.9) (Rhodobacter sphaeroides) protein is 4-deoxy-L-threo-5-hexosulose-uronate ketol-isomerase.